Here is a 206-residue protein sequence, read N- to C-terminus: MLGRLYLVVTPRPGWSLEATLDRTERALAGGVEVVQLRAKDWEARPTLALGERMLALARRYGVPFFLNDRPDLAALLGADGVHLGQNDLTPEEARRFFAGMVGRSTHAPEQALRALEEGVDYLSVGPVWETPTKPGRPAAGLAYVRWAAENLGEKPWYAIGGIDLGNLDQVLEAGARRIVVVRAILDAPDPERAARALRERLYGVA.

4-amino-2-methyl-5-(diphosphooxymethyl)pyrimidine contacts are provided by residues 36-40 and N68; that span reads QLRAK. The Mg(2+) site is built by D69 and D88. S105 lines the 4-amino-2-methyl-5-(diphosphooxymethyl)pyrimidine pocket. 131 to 133 is a 2-[(2R,5Z)-2-carboxy-4-methylthiazol-5(2H)-ylidene]ethyl phosphate binding site; it reads TPT. K134 is a 4-amino-2-methyl-5-(diphosphooxymethyl)pyrimidine binding site. 2-[(2R,5Z)-2-carboxy-4-methylthiazol-5(2H)-ylidene]ethyl phosphate is bound at residue G162.

The protein belongs to the thiamine-phosphate synthase family. Mg(2+) is required as a cofactor.

The catalysed reaction is 2-[(2R,5Z)-2-carboxy-4-methylthiazol-5(2H)-ylidene]ethyl phosphate + 4-amino-2-methyl-5-(diphosphooxymethyl)pyrimidine + 2 H(+) = thiamine phosphate + CO2 + diphosphate. The enzyme catalyses 2-(2-carboxy-4-methylthiazol-5-yl)ethyl phosphate + 4-amino-2-methyl-5-(diphosphooxymethyl)pyrimidine + 2 H(+) = thiamine phosphate + CO2 + diphosphate. It catalyses the reaction 4-methyl-5-(2-phosphooxyethyl)-thiazole + 4-amino-2-methyl-5-(diphosphooxymethyl)pyrimidine + H(+) = thiamine phosphate + diphosphate. It participates in cofactor biosynthesis; thiamine diphosphate biosynthesis; thiamine phosphate from 4-amino-2-methyl-5-diphosphomethylpyrimidine and 4-methyl-5-(2-phosphoethyl)-thiazole: step 1/1. In terms of biological role, condenses 4-methyl-5-(beta-hydroxyethyl)thiazole monophosphate (THZ-P) and 2-methyl-4-amino-5-hydroxymethyl pyrimidine pyrophosphate (HMP-PP) to form thiamine monophosphate (TMP). The sequence is that of Thiamine-phosphate synthase from Thermus thermophilus (strain ATCC BAA-163 / DSM 7039 / HB27).